We begin with the raw amino-acid sequence, 203 residues long: Thymidylate kinase (203 aa).

10-17 (GTEGSGKS) contributes to the ATP binding site.

It belongs to the thymidylate kinase family.

The enzyme catalyses dTMP + ATP = dTDP + ADP. In terms of biological role, phosphorylation of dTMP to form dTDP in both de novo and salvage pathways of dTTP synthesis. In Dichelobacter nodosus (strain VCS1703A), this protein is Thymidylate kinase.